Reading from the N-terminus, the 220-residue chain is Acetate CoA-transferase subunit alpha (220 aa).

Position 24 to 30 (24 to 30 (GGFMGIG)) interacts with CoA.

This sequence belongs to the 3-oxoacid CoA-transferase subunit A family. Heterotetramer composed of two alpha subunits (AtoD) and two beta subunits (AtoA).

Its subcellular location is the cytoplasm. It catalyses the reaction an acyl-CoA + acetate = a carboxylate + acetyl-CoA. The enzyme catalyses acetoacetate + acetyl-CoA = acetoacetyl-CoA + acetate. It carries out the reaction butanoate + acetyl-CoA = butanoyl-CoA + acetate. The catalysed reaction is acetoacetate + butanoyl-CoA = acetoacetyl-CoA + butanoate. It functions in the pathway lipid metabolism; short-chain fatty acid metabolism. Its activity is regulated as follows. Inhibited by p-chloromercuribenzoate. Its function is as follows. Coenzyme A transferase which is involved in short-chain fatty acid degradation and catalyzes the activation of short-chain fatty acids to their respective CoA thiolesters. During acetoacetate degradation, catalyzes the transfer of CoA from acetyl-CoA to acetoacetate by a mechanism involving a covalent enzyme-CoA compound as a reaction intermediate. Utilizes a variety of short chain acyl-CoA and carboxylic acid substrates but exhibits maximal activity with normal and 3-keto substrates. The chain is Acetate CoA-transferase subunit alpha from Escherichia coli (strain K12).